Consider the following 149-residue polypeptide: Large ribosomal subunit protein bL20m (149 aa).

The transit peptide at 1 to 9 (MVFLTAQLW) directs the protein to the mitochondrion.

Belongs to the bacterial ribosomal protein bL20 family. In terms of assembly, component of the mitochondrial large ribosomal subunit (mt-LSU). Mature mammalian 55S mitochondrial ribosomes consist of a small (28S) and a large (39S) subunit. The 28S small subunit contains a 12S ribosomal RNA (12S mt-rRNA) and 30 different proteins. The 39S large subunit contains a 16S rRNA (16S mt-rRNA), a copy of mitochondrial valine transfer RNA (mt-tRNA(Val)), which plays an integral structural role, and 52 different proteins. Interacts with OXA1L.

Its subcellular location is the mitochondrion. This Homo sapiens (Human) protein is Large ribosomal subunit protein bL20m (MRPL20).